A 497-amino-acid chain; its full sequence is Probable zinc metalloprotease TRV_03476 (497 aa).

Positions 1-24 (MRFLISSLLSGLALLTSLHAFVLA) are cleaved as a signal peptide. Residues asparagine 100 and asparagine 121 are each glycosylated (N-linked (GlcNAc...) asparagine). Positions 171, 191, and 227 each coordinate Zn(2+). N-linked (GlcNAc...) asparagine glycosylation is present at asparagine 242. Aspartate 254 is a Zn(2+) binding site. In terms of domain architecture, Fibronectin type-III spans 411-497 (MPRNVRVNTN…ERGVAVLPFP (87 aa)). Asparagine 424 is a glycosylation site (N-linked (GlcNAc...) asparagine).

The protein belongs to the peptidase M28 family. M28B subfamily. Zn(2+) is required as a cofactor.

It is found in the secreted. In Trichophyton verrucosum (strain HKI 0517), this protein is Probable zinc metalloprotease TRV_03476.